We begin with the raw amino-acid sequence, 294 residues long: Lipoyl synthase (294 aa).

C35, C40, C46, C61, C65, C68, and S275 together coordinate [4Fe-4S] cluster. Residues 46-264 (CWGGGTATVM…REAGLGLGFR (219 aa)) form the Radical SAM core domain.

Belongs to the radical SAM superfamily. Lipoyl synthase family. [4Fe-4S] cluster is required as a cofactor.

It is found in the cytoplasm. The enzyme catalyses [[Fe-S] cluster scaffold protein carrying a second [4Fe-4S](2+) cluster] + N(6)-octanoyl-L-lysyl-[protein] + 2 oxidized [2Fe-2S]-[ferredoxin] + 2 S-adenosyl-L-methionine + 4 H(+) = [[Fe-S] cluster scaffold protein] + N(6)-[(R)-dihydrolipoyl]-L-lysyl-[protein] + 4 Fe(3+) + 2 hydrogen sulfide + 2 5'-deoxyadenosine + 2 L-methionine + 2 reduced [2Fe-2S]-[ferredoxin]. Its pathway is protein modification; protein lipoylation via endogenous pathway; protein N(6)-(lipoyl)lysine from octanoyl-[acyl-carrier-protein]: step 2/2. Its function is as follows. Catalyzes the radical-mediated insertion of two sulfur atoms into the C-6 and C-8 positions of the octanoyl moiety bound to the lipoyl domains of lipoate-dependent enzymes, thereby converting the octanoylated domains into lipoylated derivatives. The polypeptide is Lipoyl synthase (Anaeromyxobacter sp. (strain Fw109-5)).